The following is a 296-amino-acid chain: Polyamine aminopropyltransferase (296 aa).

One can recognise a PABS domain in the interval 16 to 251; the sequence is HLWYFEYYTG…GMWSYTFASK (236 aa). An S-methyl-5'-thioadenosine-binding site is contributed by Q46. Spermidine contacts are provided by H77 and D101. S-methyl-5'-thioadenosine-binding positions include E121 and 152 to 153; that span reads NG. D170 functions as the Proton acceptor in the catalytic mechanism. 170 to 173 provides a ligand contact to spermidine; that stretch reads DSTD.

It belongs to the spermidine/spermine synthase family. Homotetramer.

It is found in the cytoplasm. The catalysed reaction is S-adenosyl 3-(methylsulfanyl)propylamine + putrescine = S-methyl-5'-thioadenosine + spermidine + H(+). It functions in the pathway amine and polyamine biosynthesis; spermidine biosynthesis; spermidine from putrescine: step 1/1. With respect to regulation, strongly inhibited by S-adenosyl-1,8-diamino-3-thiooctane. Functionally, catalyzes the irreversible transfer of a propylamine group from the amino donor S-adenosylmethioninamine (decarboxy-AdoMet) to putrescine (1,4-diaminobutane) to yield spermidine. It has lower affinity and lower activity towards 1,3-diaminopropane, cadaverine (1,5-diaminopentane), agmatine, norspermidine and spermidine (in vitro). This chain is Polyamine aminopropyltransferase, found in Thermotoga maritima (strain ATCC 43589 / DSM 3109 / JCM 10099 / NBRC 100826 / MSB8).